A 429-amino-acid chain; its full sequence is Serine--tRNA ligase (429 aa).

An L-serine-binding site is contributed by 229–231; sequence TAE. 260–262 is an ATP binding site; the sequence is RSE. Glu-283 lines the L-serine pocket. Residue 347–350 participates in ATP binding; that stretch reads EISS. An L-serine-binding site is contributed by Ser-383.

Belongs to the class-II aminoacyl-tRNA synthetase family. Type-1 seryl-tRNA synthetase subfamily. In terms of assembly, homodimer. The tRNA molecule binds across the dimer.

It localises to the cytoplasm. It carries out the reaction tRNA(Ser) + L-serine + ATP = L-seryl-tRNA(Ser) + AMP + diphosphate + H(+). It catalyses the reaction tRNA(Sec) + L-serine + ATP = L-seryl-tRNA(Sec) + AMP + diphosphate + H(+). The protein operates within aminoacyl-tRNA biosynthesis; selenocysteinyl-tRNA(Sec) biosynthesis; L-seryl-tRNA(Sec) from L-serine and tRNA(Sec): step 1/1. In terms of biological role, catalyzes the attachment of serine to tRNA(Ser). Is also able to aminoacylate tRNA(Sec) with serine, to form the misacylated tRNA L-seryl-tRNA(Sec), which will be further converted into selenocysteinyl-tRNA(Sec). This Orientia tsutsugamushi (strain Ikeda) (Rickettsia tsutsugamushi) protein is Serine--tRNA ligase.